The following is a 345-amino-acid chain: UDP-3-O-acylglucosamine N-acyltransferase 3 (345 aa).

Histidine 236 acts as the Proton acceptor in catalysis.

It belongs to the transferase hexapeptide repeat family. LpxD subfamily. Homotrimer.

It catalyses the reaction a UDP-3-O-[(3R)-3-hydroxyacyl]-alpha-D-glucosamine + a (3R)-hydroxyacyl-[ACP] = a UDP-2-N,3-O-bis[(3R)-3-hydroxyacyl]-alpha-D-glucosamine + holo-[ACP] + H(+). It participates in bacterial outer membrane biogenesis; LPS lipid A biosynthesis. Catalyzes the N-acylation of UDP-3-O-acylglucosamine using 3-hydroxyacyl-ACP as the acyl donor. Is involved in the biosynthesis of lipid A, a phosphorylated glycolipid that anchors the lipopolysaccharide to the outer membrane of the cell. The chain is UDP-3-O-acylglucosamine N-acyltransferase 3 from Gloeobacter violaceus (strain ATCC 29082 / PCC 7421).